A 478-amino-acid polypeptide reads, in one-letter code: Probable cytosol aminopeptidase (478 aa).

2 residues coordinate Mn(2+): Lys244 and Asp249. Lys256 is an active-site residue. 3 residues coordinate Mn(2+): Asp267, Asp326, and Glu328. Arg330 is an active-site residue.

It belongs to the peptidase M17 family. Mn(2+) serves as cofactor.

It is found in the cytoplasm. The catalysed reaction is Release of an N-terminal amino acid, Xaa-|-Yaa-, in which Xaa is preferably Leu, but may be other amino acids including Pro although not Arg or Lys, and Yaa may be Pro. Amino acid amides and methyl esters are also readily hydrolyzed, but rates on arylamides are exceedingly low.. It carries out the reaction Release of an N-terminal amino acid, preferentially leucine, but not glutamic or aspartic acids.. Presumably involved in the processing and regular turnover of intracellular proteins. Catalyzes the removal of unsubstituted N-terminal amino acids from various peptides. The chain is Probable cytosol aminopeptidase from Fusobacterium nucleatum subsp. nucleatum (strain ATCC 25586 / DSM 15643 / BCRC 10681 / CIP 101130 / JCM 8532 / KCTC 2640 / LMG 13131 / VPI 4355).